The following is a 331-amino-acid chain: Ribosomal RNA small subunit methyltransferase H (331 aa).

S-adenosyl-L-methionine-binding positions include 38-40, Asp-56, Phe-83, Asp-100, and Gln-107; that span reads GGY. Residues 287 to 331 are disordered; sequence DEAELAENPRARSARLRVGVRTDAPAGKVDPQALGTPLIPKKGRR.

This sequence belongs to the methyltransferase superfamily. RsmH family.

It localises to the cytoplasm. It catalyses the reaction cytidine(1402) in 16S rRNA + S-adenosyl-L-methionine = N(4)-methylcytidine(1402) in 16S rRNA + S-adenosyl-L-homocysteine + H(+). Functionally, specifically methylates the N4 position of cytidine in position 1402 (C1402) of 16S rRNA. The chain is Ribosomal RNA small subunit methyltransferase H from Cereibacter sphaeroides (strain ATCC 17023 / DSM 158 / JCM 6121 / CCUG 31486 / LMG 2827 / NBRC 12203 / NCIMB 8253 / ATH 2.4.1.) (Rhodobacter sphaeroides).